A 210-amino-acid chain; its full sequence is Frataxin, mitochondrial (210 aa).

Residues 1 to 41 (MWTLGRRAVAGLLASPSPAQAQTLTRVPRPAELAPLCGRRG) constitute a mitochondrion transit peptide.

It belongs to the frataxin family. In terms of assembly, component of the mitochondrial core iron-sulfur cluster (ISC) complex composed of NFS1, LYRM4, NDUFAB1, ISCU, FXN, and FDX2; this complex is a heterohexamer containing two copies of each monomer. Homodimer. Monomer (probable predominant form). Oligomer. Monomers and polymeric aggregates of &gt;1 MDa have been isolated from mitochondria. A small fraction of heterologous overexpressed recombinant frataxin forms high-molecular weight aggregates that incorporate iron. Interacts with LYRM4. Interacts (via ferrous form) with ISCU; the interaction is possible when both are bound to the dimeric form of the cysteine desulfurase complex (NFS1:LYRM4) and the interaction enhances FXN interaction to the dimeric form of the cysteine desulfurase complex (NFS1:LYRM4). Interacts with FECH; one iron-bound FXN monomer seems to interact with a FECH homodimer. Interacts with SDHA and SDHB. Interacts with ACO2; the interaction is dependent on citrate. Interacts with HSPA9. As to quaternary structure, interacts with ACO1. Interacts with ISCU (cytoplasmic form). Processed in two steps by mitochondrial processing peptidase (MPP). MPP first cleaves the precursor to intermediate form and subsequently converts the intermediate to yield frataxin mature form (frataxin(81-210)) which is the predominant form. The additional forms, frataxin(56-210) and frataxin(78-210), seem to be produced when the normal maturation process is impaired; their physiological relevance is unsure. Expressed in the heart, peripheral blood lymphocytes and dermal fibroblasts.

The protein resides in the mitochondrion. Its subcellular location is the cytoplasm. The protein localises to the cytosol. It carries out the reaction 4 Fe(2+) + O2 + 4 H(+) = 4 Fe(3+) + 2 H2O. Functionally, functions as an activator of persulfide transfer to the scaffoding protein ISCU as component of the core iron-sulfur cluster (ISC) assembly complex and participates to the [2Fe-2S] cluster assembly. Accelerates sulfur transfer from NFS1 persulfide intermediate to ISCU and to small thiols such as L-cysteine and glutathione leading to persulfuration of these thiols and ultimately sulfide release. Binds ferrous ion and is released from FXN upon the addition of both L-cysteine and reduced FDX2 during [2Fe-2S] cluster assembly. The core iron-sulfur cluster (ISC) assembly complex is involved in the de novo synthesis of a [2Fe-2S] cluster, the first step of the mitochondrial iron-sulfur protein biogenesis. This process is initiated by the cysteine desulfurase complex (NFS1:LYRM4:NDUFAB1) that produces persulfide which is delivered on the scaffold protein ISCU in a FXN-dependent manner. Then this complex is stabilized by FDX2 which provides reducing equivalents to accomplish the [2Fe-2S] cluster assembly. Finally, the [2Fe-2S] cluster is transferred from ISCU to chaperone proteins, including HSCB, HSPA9 and GLRX5. May play a role in the protection against iron-catalyzed oxidative stress through its ability to catalyze the oxidation of Fe(2+) to Fe(3+); the oligomeric form but not the monomeric form has in vitro ferroxidase activity. May be able to store large amounts of iron in the form of a ferrihydrite mineral by oligomerization; however, the physiological relevance is unsure as reports are conflicting and the function has only been shown using heterologous overexpression systems. May function as an iron chaperone protein that protects the aconitase [4Fe-4S]2+ cluster from disassembly and promotes enzyme reactivation. May play a role as a high affinity iron binding partner for FECH that is capable of both delivering iron to ferrochelatase and mediating the terminal step in mitochondrial heme biosynthesis. In terms of biological role, modulates the RNA-binding activity of ACO1. May be involved in the cytoplasmic iron-sulfur protein biogenesis. May contribute to oxidative stress resistance and overall cell survival. The chain is Frataxin, mitochondrial from Homo sapiens (Human).